The sequence spans 210 residues: uncharacterized protein (210 aa).

Helical transmembrane passes span Leu-5–Val-25, Phe-50–Phe-70, Tyr-75–Phe-95, and Ile-155–Ile-175.

Belongs to the Rht family.

It is found in the cell membrane. This is an uncharacterized protein from Bacillus subtilis (strain 168).